A 536-amino-acid chain; its full sequence is Phosphoenolpyruvate carboxykinase (ATP) (536 aa).

3 residues coordinate substrate: R61, Y195, and K201. Residues K201, H220, and 236-244 each bind ATP; that span reads GLSGTGKTT. Residues K201 and H220 each contribute to the Mn(2+) site. D257 provides a ligand contact to Mn(2+). E285, R322, and T447 together coordinate ATP. Position 322 (R322) interacts with substrate.

Belongs to the phosphoenolpyruvate carboxykinase (ATP) family. The cofactor is Mn(2+).

It is found in the cytoplasm. The catalysed reaction is oxaloacetate + ATP = phosphoenolpyruvate + ADP + CO2. It functions in the pathway carbohydrate biosynthesis; gluconeogenesis. In terms of biological role, involved in the gluconeogenesis. Catalyzes the conversion of oxaloacetate (OAA) to phosphoenolpyruvate (PEP) through direct phosphoryl transfer between the nucleoside triphosphate and OAA. This chain is Phosphoenolpyruvate carboxykinase (ATP), found in Allorhizobium ampelinum (strain ATCC BAA-846 / DSM 112012 / S4) (Agrobacterium vitis (strain S4)).